The chain runs to 121 residues: Protein TusC (121 aa).

It belongs to the DsrF/TusC family. Heterohexamer, formed by a dimer of trimers. The hexameric TusBCD complex contains 2 copies each of TusB, TusC and TusD. The TusBCD complex interacts with TusE.

The protein resides in the cytoplasm. In terms of biological role, part of a sulfur-relay system required for 2-thiolation of 5-methylaminomethyl-2-thiouridine (mnm(5)s(2)U) at tRNA wobble positions. This Yersinia pestis bv. Antiqua (strain Antiqua) protein is Protein TusC.